The following is a 213-amino-acid chain: Transmembrane emp24 domain-containing protein p24delta8 (213 aa).

Positions 1-22 are cleaved as a signal peptide; that stretch reads MDLCRSSILLLIIALLSPRTLS. The Lumenal portion of the chain corresponds to 23-180; that stretch reads MRYELKSSKT…QELNRSTNSK (158 aa). The region spanning 32 to 148 is the GOLD domain; that stretch reads TKCIGEEIHE…VDMMEYQVKT (117 aa). N-linked (GlcNAc...) asparagine glycosylation is present at Asn-97. A coiled-coil region spans residues 163–176; that stretch reads LREREEEMQELNRS. Arg-166 carries the omega-N-methylated arginine modification. The N-linked (GlcNAc...) asparagine glycan is linked to Asn-174. The helical transmembrane segment at 181–203 threads the bilayer; the sequence is MAWLSFGSLVVCLSVAGLQFWHL. An interaction with ARF1 region spans residues 202–213; the sequence is HLKTFFEKKKLI. Residues 204–213 lie on the Cytoplasmic side of the membrane; that stretch reads KTFFEKKKLI. Residues 206–207 carry the COPII vesicle coat-binding motif; that stretch reads FF. Residues 206-213 carry the COPI vesicle coat-binding motif; the sequence is FFEKKKLI.

It belongs to the EMP24/GP25L family. Probably oligomerizes with other members of the EMP24/GP25L family. Associates with the COPI vesicle coat (coatomer). Associates with the COPII vesicle coat (coatomer). Interacts with ARF1 (GDP-bound).

Its subcellular location is the endoplasmic reticulum membrane. The protein resides in the golgi apparatus. The protein localises to the cis-Golgi network membrane. It localises to the golgi stack membrane. Functionally, involved in vesicular protein trafficking. Mainly functions in the early secretory pathway. Thought to act as cargo receptor at the lumenal side for incorporation of secretory cargo molecules into transport vesicles and to be involved in vesicle coat formation at the cytoplasmic side. On Golgi membranes, acts as a primary receptor for ARF1-GDP which is involved in COPI-vesicle formation. This chain is Transmembrane emp24 domain-containing protein p24delta8, found in Arabidopsis thaliana (Mouse-ear cress).